A 350-amino-acid chain; its full sequence is Putative zinc metalloprotease jhp_0242 (350 aa).

His-16 is a binding site for Zn(2+). Glu-17 is an active-site residue. Zn(2+) is bound at residue His-20. A run of 5 helical transmembrane segments spans residues 43 to 63 (WFFK…GGYV), 94 to 114 (LWIL…VYFF), 249 to 269 (LIMG…VGAL), 277 to 297 (MLLL…LLPI), and 326 to 346 (LWLV…FNDI). The 70-residue stretch at 108–177 (AVLVYFFLAL…GELILEIERN (70 aa)) folds into the PDZ domain.

This sequence belongs to the peptidase M50B family. It depends on Zn(2+) as a cofactor.

It is found in the cell inner membrane. This is Putative zinc metalloprotease jhp_0242 from Helicobacter pylori (strain J99 / ATCC 700824) (Campylobacter pylori J99).